Here is a 510-residue protein sequence, read N- to C-terminus: MIWHVQNENFILDSTRIFMKAFHLLLFNGSFIFPECILIFGLILLLMIDLTSDQKDTPWLYFISSTSLVMSITALLFRWREEPMISFSGNFQTNNFNEIFQFLILLCSTLCIPLSVEYIECTEMAITEFLLFVLTATLGGMFLCGANDLITIFVAPECFSLCSYLLSGYTKRDVRSNEATMKYLLMGGASSSILVYGFSWLYGSSGGEIELQEIVNGLINTQMYNSPGISIALISITVGIGFKLSPAPFHQWTPDVYEGSPTPVVAFLSVTSKVAASASATRIFDIPFYFSSNEWHLLLEILAILSMILGNLIAITQTSMKRMLAYSSIGQIGYVIIGIIVGDSNDGYASMITYMLFYIAMNLGTFACIVLFGLRTGTDNIRDYAGLYTKDPFLALSSALCLLSLGGIPPLAGFFGKLYLFWCGWQAGLYFLVSIGLLTSVVSIYYYLKIIKLLMTGRNKEITPHVRNYRRSPLRSNNSIELSMIVCVIASTIPGISMNPIIAIAQDTLF.

Helical transmembrane passes span 31–51, 57–77, 99–119, 124–144, 149–169, 183–203, 229–249, 295–315, 323–343, 354–374, 395–415, 418–438, and 484–504; these read FIFP…IDLT, TPWL…ALLF, IFQF…VEYI, MAIT…MFLC, LITI…LSGY, YLLM…WLYG, ISIA…PAPF, WHLL…LIAI, MLAY…IVGD, YMLF…LFGL, ALSS…AGFF, LYLF…IGLL, and MIVC…IIAI.

Belongs to the complex I subunit 2 family. In terms of assembly, NDH is composed of at least 16 different subunits, 5 of which are encoded in the nucleus.

Its subcellular location is the plastid. The protein resides in the chloroplast thylakoid membrane. It catalyses the reaction a plastoquinone + NADH + (n+1) H(+)(in) = a plastoquinol + NAD(+) + n H(+)(out). The catalysed reaction is a plastoquinone + NADPH + (n+1) H(+)(in) = a plastoquinol + NADP(+) + n H(+)(out). NDH shuttles electrons from NAD(P)H:plastoquinone, via FMN and iron-sulfur (Fe-S) centers, to quinones in the photosynthetic chain and possibly in a chloroplast respiratory chain. The immediate electron acceptor for the enzyme in this species is believed to be plastoquinone. Couples the redox reaction to proton translocation, and thus conserves the redox energy in a proton gradient. The protein is NAD(P)H-quinone oxidoreductase subunit 2 A, chloroplastic of Nymphaea alba (White water-lily).